The following is a 588-amino-acid chain: Neopullulanase (588 aa).

Residues N147, N149, S153, G172, and D174 each contribute to the Ca(2+) site. Positions 247 and 326 each coordinate substrate. The Nucleophile role is filled by D328. Catalysis depends on E357, which acts as the Proton donor. Residues 423–424 (HD), D468, and R472 each bind substrate.

Belongs to the glycosyl hydrolase 13 family. In terms of assembly, homodimer. It depends on Ca(2+) as a cofactor.

It carries out the reaction Hydrolysis of pullulan to panose (6-alpha-D-glucosylmaltose).. In terms of biological role, hydrolyzes pullulan efficiently but only a small amount of starch. Endohydrolysis of 1,4-alpha-glucosidic linkages in pullulan to form panose. Also cleaves (1-6)-alpha-glucosidic linkages to form maltotriose. The protein is Neopullulanase (nplT) of Geobacillus stearothermophilus (Bacillus stearothermophilus).